Reading from the N-terminus, the 304-residue chain is Cytochrome c biogenesis protein CcsA (304 aa).

The next 8 helical transmembrane spans lie at 11–31, 37–57, 63–83, 96–116, 141–161, 212–232, 246–263, and 275–295; these read SLGF…FWAV, AGLV…QLIL, GHFP…ACTL, IVAA…SFAL, VIMV…AVLV, TITV…VWAN, TWAL…HTRL, and VAVV…LLGI.

Belongs to the CcmF/CycK/Ccl1/NrfE/CcsA family. In terms of assembly, may interact with ccs1.

The protein resides in the cellular thylakoid membrane. Functionally, required during biogenesis of c-type cytochromes (cytochrome c6 and cytochrome f) at the step of heme attachment. This chain is Cytochrome c biogenesis protein CcsA, found in Synechococcus sp. (strain CC9605).